The sequence spans 1795 residues: Putative surface cell antigen sca2 (1795 aa).

The signal sequence occupies residues 1-33 (MNLQNSHSKKYVLTFFMSTCLLTSSFLSTSARA). The span at 360-373 (FLNNNDTTKPSTGR) shows a compositional bias: polar residues. 3 disordered regions span residues 360 to 391 (FLNNNDTTKPSTGRSQKKSGSKNDHWYMSNQS), 664 to 709 (LEQT…SSNS), and 1354 to 1441 (KQEN…DEEL). The segment covering 672–700 (PNPPPLPLNGGIPNPPPLPLNGSMPPPPL) has biased composition (pro residues). Composition is skewed to basic and acidic residues over residues 1364-1383 (SSTKDDTQPEDSNKKSEQSD) and 1398-1409 (SKNDKSSDDKKS). A compositionally biased stretch (acidic residues) spans 1417-1432 (DEDDTGYATDEEELEE). One can recognise an Autotransporter domain in the interval 1516 to 1795 (ETSINRGVWI…QGLIKLKVNL (280 aa)).

Its subcellular location is the cell outer membrane. The chain is Putative surface cell antigen sca2 (sca2) from Rickettsia conorii (strain ATCC VR-613 / Malish 7).